The sequence spans 268 residues: Indole-3-glycerol phosphate synthase (268 aa).

Belongs to the TrpC family.

It carries out the reaction 1-(2-carboxyphenylamino)-1-deoxy-D-ribulose 5-phosphate + H(+) = (1S,2R)-1-C-(indol-3-yl)glycerol 3-phosphate + CO2 + H2O. It functions in the pathway amino-acid biosynthesis; L-tryptophan biosynthesis; L-tryptophan from chorismate: step 4/5. The protein is Indole-3-glycerol phosphate synthase of Acinetobacter baumannii (strain ACICU).